A 152-amino-acid polypeptide reads, in one-letter code: Venom protein family 1 protein 2 (152 aa).

The N-terminal stretch at 1–21 (MAKLVFISFLVASFCLIGCFG) is a signal peptide. Residues C70 and C150 are joined by a disulfide bond.

The protein belongs to the insect vpf1 family. In terms of tissue distribution, expressed by the venom gland (posterior main gland) (at protein level).

The protein resides in the secreted. The protein is Venom protein family 1 protein 2 of Platymeris rhadamanthus (Red spot assassin bug).